A 383-amino-acid polypeptide reads, in one-letter code: F-box/kelch-repeat protein At2g22030 (383 aa).

The F-box domain maps to 23–71 (SLLFSSLPYDVVLNCLARVSRRYYPNLSCVSKSFQSLVRSPELAHMRSL). 3 Kelch repeats span residues 130–175 (KIYF…VVNG), 176–220 (KLYV…LMRY), and 269–317 (GVCV…GMVD).

In Arabidopsis thaliana (Mouse-ear cress), this protein is F-box/kelch-repeat protein At2g22030.